A 340-amino-acid polypeptide reads, in one-letter code: Glyceraldehyde-3-phosphate dehydrogenase (340 aa).

NAD(+)-binding positions include 11–12 (SI) and Gly111. A D-glyceraldehyde 3-phosphate-binding site is contributed by 140-142 (SCN). Cys141 (nucleophile) is an active-site residue. Arg169 serves as a coordination point for NAD(+). Position 195–196 (195–196 (HG)) interacts with D-glyceraldehyde 3-phosphate. Gln303 serves as a coordination point for NAD(+).

Belongs to the glyceraldehyde-3-phosphate dehydrogenase family. As to quaternary structure, homotetramer.

It is found in the cytoplasm. The enzyme catalyses D-glyceraldehyde 3-phosphate + phosphate + NADP(+) = (2R)-3-phospho-glyceroyl phosphate + NADPH + H(+). It carries out the reaction D-glyceraldehyde 3-phosphate + phosphate + NAD(+) = (2R)-3-phospho-glyceroyl phosphate + NADH + H(+). It functions in the pathway carbohydrate degradation; glycolysis; pyruvate from D-glyceraldehyde 3-phosphate: step 1/5. The polypeptide is Glyceraldehyde-3-phosphate dehydrogenase (Methanococcus maripaludis (strain C6 / ATCC BAA-1332)).